The chain runs to 396 residues: L-lactate dehydrogenase (396 aa).

Residues 1–380 (MIISAASDYR…TQDSLVQGLG (380 aa)) enclose the FMN hydroxy acid dehydrogenase domain. Tyr-24 serves as a coordination point for substrate. FMN-binding residues include Ser-106 and Gln-127. Residue Tyr-129 participates in substrate binding. Thr-155 provides a ligand contact to FMN. Arg-164 is a substrate binding site. FMN is bound at residue Lys-251. His-275 acts as the Proton acceptor in catalysis. Arg-278 contributes to the substrate binding site. 306 to 330 (DSGIRNGLDVVRMIALGADTVLLGR) serves as a coordination point for FMN.

Belongs to the FMN-dependent alpha-hydroxy acid dehydrogenase family. FMN serves as cofactor.

The protein resides in the cell inner membrane. The enzyme catalyses (S)-lactate + A = pyruvate + AH2. In terms of biological role, catalyzes the conversion of L-lactate to pyruvate. Is coupled to the respiratory chain. The polypeptide is L-lactate dehydrogenase (Shigella dysenteriae serotype 1 (strain Sd197)).